A 163-amino-acid polypeptide reads, in one-letter code: Putative 4-hydroxy-4-methyl-2-oxoglutarate aldolase (163 aa).

Substrate-binding positions include 75 to 78 (GDQL) and R97. Residue D98 coordinates a divalent metal cation.

The protein belongs to the class II aldolase/RraA-like family. As to quaternary structure, homotrimer. It depends on a divalent metal cation as a cofactor.

The catalysed reaction is 4-hydroxy-4-methyl-2-oxoglutarate = 2 pyruvate. It carries out the reaction oxaloacetate + H(+) = pyruvate + CO2. Its function is as follows. Catalyzes the aldol cleavage of 4-hydroxy-4-methyl-2-oxoglutarate (HMG) into 2 molecules of pyruvate. Also contains a secondary oxaloacetate (OAA) decarboxylase activity due to the common pyruvate enolate transition state formed following C-C bond cleavage in the retro-aldol and decarboxylation reactions. This is Putative 4-hydroxy-4-methyl-2-oxoglutarate aldolase from Photobacterium profundum (strain SS9).